The sequence spans 37 residues: Large ribosomal subunit protein bL36 (37 aa).

This sequence belongs to the bacterial ribosomal protein bL36 family.

The protein is Large ribosomal subunit protein bL36 of Chromohalobacter salexigens (strain ATCC BAA-138 / DSM 3043 / CIP 106854 / NCIMB 13768 / 1H11).